Reading from the N-terminus, the 373-residue chain is 3-dehydroquinate synthase (373 aa).

Residues 107–111 (GVIGD), 131–132 (TS), lysine 144, and lysine 153 each bind NAD(+). Zn(2+) contacts are provided by glutamate 186, histidine 249, and histidine 267.

It belongs to the sugar phosphate cyclases superfamily. Dehydroquinate synthase family. Requires Co(2+) as cofactor. Zn(2+) serves as cofactor. NAD(+) is required as a cofactor.

The protein resides in the cytoplasm. It carries out the reaction 7-phospho-2-dehydro-3-deoxy-D-arabino-heptonate = 3-dehydroquinate + phosphate. It functions in the pathway metabolic intermediate biosynthesis; chorismate biosynthesis; chorismate from D-erythrose 4-phosphate and phosphoenolpyruvate: step 2/7. In terms of biological role, catalyzes the conversion of 3-deoxy-D-arabino-heptulosonate 7-phosphate (DAHP) to dehydroquinate (DHQ). The polypeptide is 3-dehydroquinate synthase (Ruegeria sp. (strain TM1040) (Silicibacter sp.)).